A 70-amino-acid chain; its full sequence is Large ribosomal subunit protein bL31 (70 aa).

Positions 16, 18, 37, and 40 each coordinate Zn(2+).

The protein belongs to the bacterial ribosomal protein bL31 family. Type A subfamily. Part of the 50S ribosomal subunit. Requires Zn(2+) as cofactor.

Functionally, binds the 23S rRNA. The polypeptide is Large ribosomal subunit protein bL31 (Cronobacter sakazakii (strain ATCC BAA-894) (Enterobacter sakazakii)).